We begin with the raw amino-acid sequence, 236 residues long: CD81 antigen (236 aa).

The Cytoplasmic segment spans residues 1–12 (MGVEGCTKCIKY). The chain crosses the membrane as a helical span at residues 13–33 (LLFVFNFVFWLAGGVILGVAL). Residues 34-63 (WLRHDPQTTSLLYLELGNKPAPNTFYVGIY) are Extracellular-facing. A helical membrane pass occupies residues 64–84 (ILIAVGAVMMFVGFLGCYGAI). Residues 85 to 89 (QESQC) lie on the Cytoplasmic side of the membrane. A helical membrane pass occupies residues 90–112 (LLGTFFTCLVILFACEVAAGIWG). Over 113–201 (FVNKDQIAKD…QKIDELFSGK (89 aa)) the chain is Extracellular. Disulfide bonds link Cys156–Cys190 and Cys157–Cys175. A helical transmembrane segment spans residues 202 to 224 (LYLIGIAAIVVAVIMIFEMILSM). Glu219 is a binding site for cholesterol. Topologically, residues 225–236 (VLCCGIRNSSVY) are cytoplasmic.

The protein belongs to the tetraspanin (TM4SF) family. In terms of assembly, homodimer. Part of a complex composed of CD19, CR2/CD21, CD81 and IFITM1/CD225 in the membrane of mature B cells. Interacts (via the second extracellular domain) with CD19; this interaction is initiated early during biosynthesis in the ER and enables trafficking of only properly folded CD19. Part of a complex that includes MHC class II/HLA-DR molecules and IFITM1. Interacts with IFITM1. Interacts with IFITM2 and IFITM3. Part of integrin-tetraspanin complex composed of CD9, CD81, beta-1 and beta-2 integrins in the membrane of monocyte/macrophages. Interacts (via the second extracellular domain) with integrin ITGAV:ITGB3. Interacts with CD247/CD3 zeta, ICAM1 and CD9 at the immune synapse on T cell membrane. Part of a GPCR-tetraspanin complex consisting at least of ADGRG1, CD81, possibly CD9, and GNA11 in which CD81 enhances the association of ADGRG1 with GNA11. Part of a complex composed of CD9, CD81, PTGFRN and IGSF8. Interacts directly with IGSF8. Interacts with CD53 and SCIMP. Interacts with SAMHD1 (via its C-terminus). Interacts with glypican GPC3 and with the transcriptional repressor HHEX; binding to GPC3 decreases the availability of free CD81 for binding to HHEX, resulting in nuclear translocation of HHEX and transcriptional repression. Interacts with CLDN1. Interacts with CLDN6 and CLDN9. In terms of processing, not glycosylated. Post-translationally, likely constitutively palmitoylated at low levels. Protein palmitoylation is up-regulated upon coligation of BCR and CD9-C2R-CD81 complexes in lipid rafts. As to expression, expressed in oocytes (at protein level). Highly expressed in granulosa cells. Expressed in skeletal muscle mainly in endothelial cells of endomysial capillaries, in satellite cells and myoblasts (at protein level). Expressed in hepatocytes (at protein level).

It is found in the cell membrane. Its subcellular location is the basolateral cell membrane. Structural component of specialized membrane microdomains known as tetraspanin-enriched microdomains (TERMs), which act as platforms for receptor clustering and signaling. Essential for trafficking and compartmentalization of CD19 receptor on the cell surface of activated B cells. Upon initial encounter with a microbial pathogen, enables the assembly of CD19-CR2 and B cell receptor complexes at signaling TERMs, lowering the threshold dose of antigen required to trigger B cell clonal expansion and humoral immune response. In T cells, associates with CD4 or CD8 coreceptors and defines the maturation state of antigen-induced synapses with B cells. Facilitates localization of CD3 in these immune synapses, required for costimulation and sustained activation of T cells, preferentially triggering T helper type 2 immune response. Can act both as positive and negative regulator of homotypic or heterotypic cell-cell fusion processes. In myoblasts, associates with another tetraspanin CD9 in complex with PTGFRN and inhibits myotube fusion during muscle regeneration. In macrophages, associates with CD9 and beta-1 and beta-2 integrins, and prevents macrophage fusion into multinucleated giant cells specialized in ingesting complement-opsonized large particles. Also prevents the fusion between mononuclear cell progenitors into osteoclasts in charge of bone resorption. Positively regulates sperm-egg fusion and may be involved in the acrosome reaction. Regulates protein trafficking in intracellular compartments. In T cells, associates with dNTPase SAMHD1 and defines its subcellular location, enabling its degradation by the proteasome and thereby controlling intracellular dNTP levels. Also regulates integrin-dependent migration of macrophages, particularly relevant for inflammatory response in the lung. Functionally, (Microbial infection) Specifically required for Plasmodium yoelii infectivity of hepatocytes, controlling sporozoite entry in hepatocytes via the parasitophorous vacuole and subsequent parasite differentiation to exoerythrocytic forms. The polypeptide is CD81 antigen (Mus musculus (Mouse)).